Here is a 122-residue protein sequence, read N- to C-terminus: Small ribosomal subunit protein uS13 (122 aa).

Residues Arg-99–Lys-122 form a disordered region.

This sequence belongs to the universal ribosomal protein uS13 family. As to quaternary structure, part of the 30S ribosomal subunit. Forms a loose heterodimer with protein S19. Forms two bridges to the 50S subunit in the 70S ribosome.

In terms of biological role, located at the top of the head of the 30S subunit, it contacts several helices of the 16S rRNA. In the 70S ribosome it contacts the 23S rRNA (bridge B1a) and protein L5 of the 50S subunit (bridge B1b), connecting the 2 subunits; these bridges are implicated in subunit movement. Contacts the tRNAs in the A and P-sites. The protein is Small ribosomal subunit protein uS13 of Rhodopseudomonas palustris (strain BisB5).